A 391-amino-acid chain; its full sequence is Succinate--CoA ligase [GDP-forming] subunit beta, mitochondrial (391 aa).

The 229-residue stretch at 5-233 (KKIMADHGVT…NAEFRQKEIF (229 aa)) folds into the ATP-grasp domain. Residues Gln16, 49–51 (GRG), and Leu105 each bind GTP. 2 residues coordinate Mg(2+): Asn202 and Asp216. Residues Asn267 and 324-326 (GIV) contribute to the substrate site.

This sequence belongs to the succinate/malate CoA ligase beta subunit family. GTP-specific subunit beta subfamily. As to quaternary structure, heterodimer of an alpha and a beta subunit. The beta subunit determines specificity for GTP. The cofactor is Mg(2+). In terms of tissue distribution, widely expressed. Not present in breast muscle.

Its subcellular location is the mitochondrion. It catalyses the reaction GTP + succinate + CoA = succinyl-CoA + GDP + phosphate. The protein operates within carbohydrate metabolism; tricarboxylic acid cycle; succinate from succinyl-CoA (ligase route): step 1/1. GTP-specific succinyl-CoA synthetase functions in the citric acid cycle (TCA), coupling the hydrolysis of succinyl-CoA to the synthesis of GTP and thus represents the only step of substrate-level phosphorylation in the TCA. The beta subunit provides nucleotide specificity of the enzyme and binds the substrate succinate, while the binding sites for coenzyme A and phosphate are found in the alpha subunit. The chain is Succinate--CoA ligase [GDP-forming] subunit beta, mitochondrial from Columba livia (Rock dove).